Reading from the N-terminus, the 270-residue chain is 4-hydroxy-tetrahydrodipicolinate reductase (270 aa).

Residues 9-14 and E35 contribute to the NAD(+) site; that span reads GAGGRM. An NADP(+)-binding site is contributed by R36. Residues 99 to 101 and 123 to 126 contribute to the NAD(+) site; these read GTT and ASNF. H156 acts as the Proton donor/acceptor in catalysis. Residue H157 coordinates (S)-2,3,4,5-tetrahydrodipicolinate. Catalysis depends on K160, which acts as the Proton donor. Residue 166–167 participates in (S)-2,3,4,5-tetrahydrodipicolinate binding; that stretch reads GT.

It belongs to the DapB family.

Its subcellular location is the cytoplasm. It carries out the reaction (S)-2,3,4,5-tetrahydrodipicolinate + NAD(+) + H2O = (2S,4S)-4-hydroxy-2,3,4,5-tetrahydrodipicolinate + NADH + H(+). It catalyses the reaction (S)-2,3,4,5-tetrahydrodipicolinate + NADP(+) + H2O = (2S,4S)-4-hydroxy-2,3,4,5-tetrahydrodipicolinate + NADPH + H(+). It functions in the pathway amino-acid biosynthesis; L-lysine biosynthesis via DAP pathway; (S)-tetrahydrodipicolinate from L-aspartate: step 4/4. In terms of biological role, catalyzes the conversion of 4-hydroxy-tetrahydrodipicolinate (HTPA) to tetrahydrodipicolinate. The protein is 4-hydroxy-tetrahydrodipicolinate reductase of Haemophilus influenzae (strain ATCC 51907 / DSM 11121 / KW20 / Rd).